Reading from the N-terminus, the 455-residue chain is Membrane protein Pbs54 (455 aa).

Residues I12–F32 traverse the membrane as a helical segment. N41, N102, and N125 each carry an N-linked (GlcNAc...) asparagine glycan. Helical transmembrane passes span I181–G201, F220–I240, I244–F264, I285–I305, F312–L332, and F346–I366. The N-linked (GlcNAc...) asparagine glycan is linked to N373. The helical transmembrane segment at N398–I418 threads the bilayer.

The protein localises to the cell projection. It localises to the cilium. Its subcellular location is the flagellum. The protein resides in the cell membrane. In terms of biological role, plays a role in gamete fertilization. Required for the successful transmission of parasites to mosquito. In Plasmodium berghei (strain Anka), this protein is Membrane protein Pbs54.